Reading from the N-terminus, the 301-residue chain is MAEIGIDQSKLPGVKEVCRDFAVLEDHTLAHNLQEQEIEHHLATNIQRNRLVQHDLQVAKQLQEEEDLKARAQIQKRQKDLERQDSEIAQEIQVKLVFEAEQRRRQEEKDEDIARLLQQKELQEEKKRKKHYPESQEHKVYEDSYYSENGGTKLRGTKQTVYDKPRREQELSDAEIARKLQEEELLANQADQMAAQVAQDEEIARLLMAEEKKAFKKGKEKEKSSFERKRNDQDWKHDASESPRSRSKEGPETQRHKGDKSSRSQPLLDDFEHARYYTSQPSPLRQFSKPEHSPKGSRRKQ.

The stretch at 57–131 (QVAKQLQEEE…LQEEKKRKKH (75 aa)) forms a coiled coil. Composition is skewed to basic and acidic residues over residues 123–142 (QEEK…KVYE), 161–175 (VYDK…SDAE), and 214–262 (AFKK…DKSS). Disordered stretches follow at residues 123–175 (QEEK…SDAE) and 214–301 (AFKK…RRKQ).

Phosphorylated on tyrosine residues.

Functionally, involved in EGFR signaling. In Gallus gallus (Chicken), this protein is Coiled-coil domain-containing protein 50 (CCDC50).